Consider the following 255-residue polypeptide: MSKNEINTNINIKDLNLWYGEKHALKDISLDIPEKSVTALIGPSGCGKSTFLRCLNRMNDLVKSCSIEGEVLVDGENIYDKDVDVVDLRKNVGMVFQKPNPFPMSIYDNIAYGPKIHGCSKSETEERVHKALDDAALMGEVQDRLGDQAFSLSGGQQQRLCIARTLAVKPEILLFDEPCSALDPISTSKIEDLILELKKDYTIVIVTHNMQQAARISDHTAFFLHGEIIEFGKTKHIFEDPQMKSTEDYITGRFG.

The ABC transporter domain maps to 10–250 (INIKDLNLWY…PQMKSTEDYI (241 aa)). An ATP-binding site is contributed by 42–49 (GPSGCGKS).

This sequence belongs to the ABC transporter superfamily. Phosphate importer (TC 3.A.1.7) family. In terms of assembly, the complex is composed of two ATP-binding proteins (PstB), two transmembrane proteins (PstC and PstA) and a solute-binding protein (PstS).

The protein localises to the cell membrane. The catalysed reaction is phosphate(out) + ATP + H2O = ADP + 2 phosphate(in) + H(+). Part of the ABC transporter complex PstSACB involved in phosphate import. Responsible for energy coupling to the transport system. This chain is Phosphate import ATP-binding protein PstB, found in Methanococcoides burtonii (strain DSM 6242 / NBRC 107633 / OCM 468 / ACE-M).